We begin with the raw amino-acid sequence, 140 residues long: Large ribosomal subunit protein bL17 (140 aa).

It belongs to the bacterial ribosomal protein bL17 family. In terms of assembly, part of the 50S ribosomal subunit. Contacts protein L32.

This Rhizobium leguminosarum bv. trifolii (strain WSM2304) protein is Large ribosomal subunit protein bL17.